Reading from the N-terminus, the 524-residue chain is MEEADFVQKDPTGRYIRYNDVLGRGAFKTVYKAFDEVEGIEVAWNLMSIEDVLQMPGQLDRLYSEVHLLNSLKHDNIIKLFYSWVDDHNKSINMITELFTSGSLTLYRKKHRKVDPKAIMNWARQILKGLHYLHSQTPPVIHRDLKCDNIFVNGNTGKVKIGDLGLAAVMQQPTARSVIGTPEFMAPELYEEEYNELVDIYSFGMCMLEMVTCEYPYRECRNQAQIYKKVTSGIKPQSLSKVDDPQVKQFIEKCLLPAPSRPTALELLKDQLLAVDGAKDSTLTASSNTTFKPAMPPQCEYRPMDVEYKKNTSVSICSSAKSSQECALLQTMEVQRVAESTEFKLSGERRDDVAASMALRIAGSSGQARKVDFDFNLKTDTARAVTGEMVEELDLSSHEVTVIAEMIDELIMKLKANRSLPNANSVYQSKDEEAGESMKSEISADYYHRVSSNEGSRLGCCCEAVESLLSSFLDSCSMVSNKQSEDLKTELNVIESQYNQSCQRLLRMKEEAIEKAKRKWMKLS.

Residues 16–273 (IRYNDVLGRG…ALELLKDQLL (258 aa)) form the Protein kinase domain. Residues 96-99 (TELF) and Lys-146 contribute to the ATP site. Asp-163 functions as the Proton acceptor in the catalytic mechanism. Ser-477 is modified (phosphoserine). Positions 480-523 (SNKQSEDLKTELNVIESQYNQSCQRLLRMKEEAIEKAKRKWMKL) form a coiled coil.

It belongs to the protein kinase superfamily. Ser/Thr protein kinase family. WNK subfamily.

It catalyses the reaction L-seryl-[protein] + ATP = O-phospho-L-seryl-[protein] + ADP + H(+). It carries out the reaction L-threonyl-[protein] + ATP = O-phospho-L-threonyl-[protein] + ADP + H(+). Its function is as follows. May regulate flowering time by modulating the photoperiod pathway. This chain is Probable serine/threonine-protein kinase WNK10 (WNK10), found in Arabidopsis thaliana (Mouse-ear cress).